The chain runs to 505 residues: Ribose import ATP-binding protein RbsA 1 (505 aa).

ABC transporter domains lie at 13–249 and 254–503; these read LALR…VGRD and YPKQ…TGRA. 45 to 52 provides a ligand contact to ATP; the sequence is GENGAGKS.

This sequence belongs to the ABC transporter superfamily. Ribose importer (TC 3.A.1.2.1) family. In terms of assembly, the complex is composed of an ATP-binding protein (RbsA), two transmembrane proteins (RbsC) and a solute-binding protein (RbsB).

The protein resides in the cell membrane. It carries out the reaction D-ribose(out) + ATP + H2O = D-ribose(in) + ADP + phosphate + H(+). In terms of biological role, part of the ABC transporter complex RbsABC involved in ribose import. Responsible for energy coupling to the transport system. The polypeptide is Ribose import ATP-binding protein RbsA 1 (Streptomyces coelicolor (strain ATCC BAA-471 / A3(2) / M145)).